The primary structure comprises 527 residues: Bifunctional purine biosynthesis protein PurH (527 aa).

The MGS-like domain maps to 1-149; it reads MTADLLPVRR…KNFARVAVAT (149 aa).

Belongs to the PurH family.

It carries out the reaction (6R)-10-formyltetrahydrofolate + 5-amino-1-(5-phospho-beta-D-ribosyl)imidazole-4-carboxamide = 5-formamido-1-(5-phospho-D-ribosyl)imidazole-4-carboxamide + (6S)-5,6,7,8-tetrahydrofolate. The enzyme catalyses IMP + H2O = 5-formamido-1-(5-phospho-D-ribosyl)imidazole-4-carboxamide. It participates in purine metabolism; IMP biosynthesis via de novo pathway; 5-formamido-1-(5-phospho-D-ribosyl)imidazole-4-carboxamide from 5-amino-1-(5-phospho-D-ribosyl)imidazole-4-carboxamide (10-formyl THF route): step 1/1. It functions in the pathway purine metabolism; IMP biosynthesis via de novo pathway; IMP from 5-formamido-1-(5-phospho-D-ribosyl)imidazole-4-carboxamide: step 1/1. This Stenotrophomonas maltophilia (strain R551-3) protein is Bifunctional purine biosynthesis protein PurH.